The sequence spans 338 residues: 1-aminocyclopropane-1-carboxylate deaminase (338 aa).

Position 51 is an N6-(pyridoxal phosphate)lysine (Lys-51). The active-site Nucleophile is Ser-78.

This sequence belongs to the ACC deaminase/D-cysteine desulfhydrase family. Requires pyridoxal 5'-phosphate as cofactor.

The enzyme catalyses 1-aminocyclopropane-1-carboxylate + H2O = 2-oxobutanoate + NH4(+). Functionally, catalyzes a cyclopropane ring-opening reaction, the irreversible conversion of 1-aminocyclopropane-1-carboxylate (ACC) to ammonia and alpha-ketobutyrate. Allows growth on ACC as a nitrogen source. This Enterobacter cloacae protein is 1-aminocyclopropane-1-carboxylate deaminase.